The primary structure comprises 269 residues: Interleukin-1 beta (269 aa).

Residues 1–116 (MAEVPELASE…TRNNDACVHD (116 aa)) constitute a propeptide that is removed on maturation.

Belongs to the IL-1 family. As to quaternary structure, monomer. In its precursor form, weakly interacts with full-length MEFV; the mature cytokine does not interact at all. Interacts with integrins ITGAV:ITGBV and ITGA5:ITGB1; integrin-binding is required for IL1B signaling. Interacts with cargo receptor TMED10; the interaction is direct and is required for the secretion of IL1B mature form. Interacts with HSP90AB1; the interaction facilitates cargo translocation into the ERGIC. Interacts with HSP90B1; the interaction facilitates cargo translocation into the ERGIC.

The protein localises to the cytoplasm. It is found in the cytosol. Its subcellular location is the secreted. The protein resides in the lysosome. It localises to the extracellular exosome. In terms of biological role, potent pro-inflammatory cytokine. Initially discovered as the major endogenous pyrogen, induces prostaglandin synthesis, neutrophil influx and activation, T-cell activation and cytokine production, B-cell activation and antibody production, and fibroblast proliferation and collagen production. Promotes Th17 differentiation of T-cells. Synergizes with IL12/interleukin-12 to induce IFNG synthesis from T-helper 1 (Th1) cells. Plays a role in angiogenesis by inducing VEGF production synergistically with TNF and IL6. Involved in transduction of inflammation downstream of pyroptosis: its mature form is specifically released in the extracellular milieu by passing through the gasdermin-D (GSDMD) pore. The chain is Interleukin-1 beta (IL1B) from Macaca nemestrina (Pig-tailed macaque).